A 326-amino-acid polypeptide reads, in one-letter code: BTB/POZ domain-containing protein At1g21780 (326 aa).

A BTB domain is found at 161–228; the sequence is TDVIIHTADG…LYGNITQEEF (68 aa).

Homodimer. Interacts with CUL3A and CUL3B.

It participates in protein modification; protein ubiquitination. Its function is as follows. May act as a substrate-specific adapter of an E3 ubiquitin-protein ligase complex (CUL3-RBX1-BTB) which mediates the ubiquitination and subsequent proteasomal degradation of target proteins. The protein is BTB/POZ domain-containing protein At1g21780 of Arabidopsis thaliana (Mouse-ear cress).